Reading from the N-terminus, the 143-residue chain is Ribosome-binding factor A (143 aa).

Residues 1–20 form a disordered region; the sequence is MRFMGKNKFHTGPGPSQRQL.

This sequence belongs to the RbfA family. As to quaternary structure, monomer. Binds 30S ribosomal subunits, but not 50S ribosomal subunits or 70S ribosomes.

It is found in the cytoplasm. In terms of biological role, one of several proteins that assist in the late maturation steps of the functional core of the 30S ribosomal subunit. Associates with free 30S ribosomal subunits (but not with 30S subunits that are part of 70S ribosomes or polysomes). Required for efficient processing of 16S rRNA. May interact with the 5'-terminal helix region of 16S rRNA. The protein is Ribosome-binding factor A of Roseobacter denitrificans (strain ATCC 33942 / OCh 114) (Erythrobacter sp. (strain OCh 114)).